Reading from the N-terminus, the 397-residue chain is Autophagy-related protein 29 (397 aa).

A disordered region spans residues 71–397; sequence ATAAVRNSGP…RSRYTSSSNQ (327 aa). A compositionally biased stretch (acidic residues) spans 230–240; it reads QYEDDDDDESE. The span at 245-259 shows a compositional bias: polar residues; sequence PYTSPSSKTSAQDLG. Residues 269–282 are compositionally biased toward basic residues; the sequence is SGKRPHKSHGKPAI. Composition is skewed to basic and acidic residues over residues 300–309 and 330–341; these read KPDKTDRSTE and GGKDKGYSREGS. Composition is skewed to polar residues over residues 343-363 and 381-397; these read GTPS…TQSA and FSIS…SSNQ.

It belongs to the ATG29 family. In terms of assembly, forms a stable complex with ATG17 and ATG31. Interacts directly with ATG31. The ATG17-ATG29-ATG31 complex interacts with the ATG1-ATG13 complex. Note=The interaction with the ATG1-ATG13 complex is induced by starvation.

The protein localises to the preautophagosomal structure. In terms of biological role, plays a role in autophagy. Functions at the preautophagosomal structure (PAS) in order to form normal autophagosomes under starvation conditions. Also plays a role in mitophagy. Autophagy is required for proper vegetative growth, asexual/sexual reproduction, and full virulence. Autophagy is particularly involved in the biosynthesis of deoxynivalenol (DON), an important virulence determinant. The polypeptide is Autophagy-related protein 29 (Gibberella zeae (strain ATCC MYA-4620 / CBS 123657 / FGSC 9075 / NRRL 31084 / PH-1) (Wheat head blight fungus)).